The primary structure comprises 586 residues: FAD-linked oxidoreductase orf1 (586 aa).

A signal peptide spans 1–17 (MKSFATTVLLVTPGIYA). N-linked (GlcNAc...) asparagine glycans are attached at residues Asn-29, Asn-51, Asn-79, Asn-110, Asn-146, Asn-188, Asn-314, Asn-321, Asn-358, Asn-402, Asn-434, and Asn-461. Residues 124–303 (TLGNYVSYAI…LSMTAKVHPD (180 aa)) enclose the FAD-binding PCMH-type domain.

This sequence belongs to the oxygen-dependent FAD-linked oxidoreductase family.

It catalyses the reaction betaenone C = betaenone A. It participates in mycotoxin biosynthesis. Its function is as follows. FAD-linked oxidoreductase; part of the gene cluster that mediates the biosynthesis of betaenones, phytotoxic polyketides involved in leaf spot disease in sugar beets. The first step of the pathway is the synthesis of dehydroprobetaenone I by the polyketide synthase bet1 and the enoyl reductase bet3 via condensation of one acetyl-CoA starter unit with 7 malonyl-CoA units and 5 methylations. The C-terminal reductase (R) domain of bet1 catalyzes the reductive release of the polyketide chain. Because bet1 lacks a designated enoylreductase (ER) domain, the required activity is provided the enoyl reductase bet3. The short-chain dehydrogenase/reductase bet4 then catalyzes reduction of dehydroprobetaenone I to probetaenone I. The cytochrome P450 monooxygenase bet2 catalyzes successive epoxidation, oxidation (resulting from epoxide opening) and hydroxylation to install a tertiary alcohol in the decaline ring to yield betaenone C from dehydroprobetaenone I and betaenone B from probetaenone I. The FAD-linked oxidoreductase (orf1) is probably responsible for the conversion of betaenone C to betaenone A via an intramolecular aldol reaction between C-1 and C-17 to form the bridged tricyclic system in betaenone A. This Neocamarosporium betae (Beet black rot fungus) protein is FAD-linked oxidoreductase orf1.